A 288-amino-acid polypeptide reads, in one-letter code: MKGSTVHTKWQAYCRLMRIDKPIGSLLLLWPTLWALWLAGRGIPEAKILVVFVLGVFFMRAAGCVVNDYADRHIDSFVKRTASRPLPSGTISEKESKILFVVLILLSFGLVLTLNSMTIWLSLAALALAWIYPFMKRVTHLPQVVLGAAFGWSIPMGFAAVSESLPLVCWLLLLANICWTVAYDTQYAMVDRDDDLRIGVKSTAILFGQHDKLIIGLLQLATLLLMVAIGWLMNLGGAFYWSILLAGALFTHQQKMIAQREREPCFRAFLNNNYVGLVLFLGILISYW.

Helical transmembrane passes span 23-43 (IGSLLLLWPTLWALWLAGRGI), 46-66 (AKILVVFVLGVFFMRAAGCVV), 98-118 (ILFVVLILLSFGLVLTLNSMT), 141-161 (LPQVVLGAAFGWSIPMGFAAV), 163-183 (ESLPLVCWLLLLANICWTVAY), 213-233 (LIIGLLQLATLLLMVAIGWLM), 234-254 (NLGGAFYWSILLAGALFTHQQ), and 268-288 (AFLNNNYVGLVLFLGILISYW).

It belongs to the UbiA prenyltransferase family. Mg(2+) serves as cofactor.

The protein resides in the cell inner membrane. It catalyses the reaction all-trans-octaprenyl diphosphate + 4-hydroxybenzoate = 4-hydroxy-3-(all-trans-octaprenyl)benzoate + diphosphate. It functions in the pathway cofactor biosynthesis; ubiquinone biosynthesis. In terms of biological role, catalyzes the prenylation of para-hydroxybenzoate (PHB) with an all-trans polyprenyl group. Mediates the second step in the final reaction sequence of ubiquinone-8 (UQ-8) biosynthesis, which is the condensation of the polyisoprenoid side chain with PHB, generating the first membrane-bound Q intermediate 3-octaprenyl-4-hydroxybenzoate. This Yersinia pseudotuberculosis serotype IB (strain PB1/+) protein is 4-hydroxybenzoate octaprenyltransferase.